The chain runs to 282 residues: Secretory carrier-associated membrane protein 3 (282 aa).

Residues 1–36 (MAGKHGRNGFEDDDVNPFAGGSVPPANNSRLPPLSH) form a disordered region. Topologically, residues 1 to 117 (MAGKHGRNGF…EIPIHLQRMQ (117 aa)) are cytoplasmic. A coiled-coil region spans residues 48 to 92 (LDSSKDLKKKEKELQAMEAELNKRERELKRKEEAAAQAGIVIEDK). 4 helical membrane passes run 118–138 (YLAF…IIAT), 148–168 (VIIW…AYVL), 185–205 (FGWF…AAVA), and 230–250 (IVGI…LLSI). Residues 251-282 (GVIQQVYMYFRGSGKAAEMKREAARGALSSAF) lie on the Cytoplasmic side of the membrane.

The protein belongs to the SCAMP family.

It is found in the cell membrane. The protein resides in the cytoplasmic vesicle. Its subcellular location is the secretory vesicle membrane. Functionally, probably involved in membrane trafficking. The sequence is that of Secretory carrier-associated membrane protein 3 (SCAMP3) from Oryza sativa subsp. japonica (Rice).